Here is a 106-residue protein sequence, read N- to C-terminus: Pyrimidine/purine nucleoside phosphorylase (106 aa).

It belongs to the nucleoside phosphorylase PpnP family.

It catalyses the reaction a purine D-ribonucleoside + phosphate = a purine nucleobase + alpha-D-ribose 1-phosphate. The catalysed reaction is adenosine + phosphate = alpha-D-ribose 1-phosphate + adenine. It carries out the reaction cytidine + phosphate = cytosine + alpha-D-ribose 1-phosphate. The enzyme catalyses guanosine + phosphate = alpha-D-ribose 1-phosphate + guanine. It catalyses the reaction inosine + phosphate = alpha-D-ribose 1-phosphate + hypoxanthine. The catalysed reaction is thymidine + phosphate = 2-deoxy-alpha-D-ribose 1-phosphate + thymine. It carries out the reaction uridine + phosphate = alpha-D-ribose 1-phosphate + uracil. The enzyme catalyses xanthosine + phosphate = alpha-D-ribose 1-phosphate + xanthine. Functionally, catalyzes the phosphorolysis of diverse nucleosides, yielding D-ribose 1-phosphate and the respective free bases. Can use uridine, adenosine, guanosine, cytidine, thymidine, inosine and xanthosine as substrates. Also catalyzes the reverse reactions. This chain is Pyrimidine/purine nucleoside phosphorylase, found in Leptospira interrogans serogroup Icterohaemorrhagiae serovar copenhageni (strain Fiocruz L1-130).